Here is a 228-residue protein sequence, read N- to C-terminus: Urease accessory protein UreF (228 aa).

It belongs to the UreF family. UreD, UreF and UreG form a complex that acts as a GTP-hydrolysis-dependent molecular chaperone, activating the urease apoprotein by helping to assemble the nickel containing metallocenter of UreC. The UreE protein probably delivers the nickel.

The protein resides in the cytoplasm. Required for maturation of urease via the functional incorporation of the urease nickel metallocenter. In Prochlorococcus marinus (strain MIT 9312), this protein is Urease accessory protein UreF.